The chain runs to 315 residues: Taste receptor type 2 member 3 (315 aa).

The Extracellular segment spans residues 1-5 (MGLTE). A helical membrane pass occupies residues 6 to 26 (GLFLILSGTQFALGILVNCFI). Residues 27–41 (GLVNGSSWFKTKRMS) are Cytoplasmic-facing. The chain crosses the membrane as a helical span at residues 42-62 (LSDFIITTLAFLRIILLCIIL). Residues 63–93 (TDSFLIEFSPNAHDSGVIMQIIDVSWTFTNH) lie on the Extracellular side of the membrane. The helical transmembrane segment at 94–114 (LSIWLATCLGVLYCLKIASFS) threads the bilayer. Residues 115–127 (HPTFLWLKWRVSR) are Cytoplasmic-facing. A helical membrane pass occupies residues 128 to 148 (VMVWMLLGVLLLSCGSTASLI). The Extracellular portion of the chain corresponds to 149-185 (NEFKLYSVFRGIEATXNVTEHFRKKRSEYYLIHVLGT). The N-linked (GlcNAc...) asparagine glycan is linked to Asn165. Residues 186–206 (LWYLPPLIVSLAAYFLLIFSL) form a helical membrane-spanning segment. The Cytoplasmic portion of the chain corresponds to 207–233 (GRHTRQMLQNGTSSRDPSTEAHKRAIR). A helical membrane pass occupies residues 234–254 (IILSSFFLFLLYFLAFLIASF). Residues 255-265 (GNFLPKTKMAK) are Extracellular-facing. Residues 266-286 (MIGEVMTMFYPAGHSFILILG) form a helical membrane-spanning segment. Residues 287–315 (NSKLKQTFVEMLRCESGHLKPGSKGPIFS) are Cytoplasmic-facing.

It belongs to the G-protein coupled receptor T2R family.

The protein localises to the membrane. Gustducin-coupled receptor implicated in the perception of bitter compounds in the oral cavity and the gastrointestinal tract. Signals through PLCB2 and the calcium-regulated cation channel TRPM5. The polypeptide is Taste receptor type 2 member 3 (TAS2R3) (Pongo pygmaeus (Bornean orangutan)).